The primary structure comprises 199 residues: Adenine phosphoribosyltransferase (199 aa).

Belongs to the purine/pyrimidine phosphoribosyltransferase family. In terms of assembly, homodimer.

It localises to the cytoplasm. The enzyme catalyses AMP + diphosphate = 5-phospho-alpha-D-ribose 1-diphosphate + adenine. It functions in the pathway purine metabolism; AMP biosynthesis via salvage pathway; AMP from adenine: step 1/1. Catalyzes a salvage reaction resulting in the formation of AMP, that is energically less costly than de novo synthesis. The sequence is that of Adenine phosphoribosyltransferase from Rhodopseudomonas palustris (strain BisB18).